We begin with the raw amino-acid sequence, 130 residues long: Protein ApaG (130 aa).

Positions 3 to 127 constitute an ApaG domain; that stretch reads SAVTQDIQIT…FSLDSPFVRR (125 aa).

The polypeptide is Protein ApaG (Methylocella silvestris (strain DSM 15510 / CIP 108128 / LMG 27833 / NCIMB 13906 / BL2)).